The chain runs to 567 residues: Urease subunit alpha (567 aa).

Positions 129–567 constitute a Urease domain; the sequence is GGVDTHIHWI…LPMAQRYFLF (439 aa). Ni(2+)-binding residues include histidine 134, histidine 136, and lysine 217. The residue at position 217 (lysine 217) is an N6-carboxylysine. Histidine 219 is a binding site for substrate. The Ni(2+) site is built by histidine 246 and histidine 272. Residue histidine 320 is the Proton donor of the active site. Aspartate 360 provides a ligand contact to Ni(2+).

Belongs to the metallo-dependent hydrolases superfamily. Urease alpha subunit family. In terms of assembly, heterotrimer of UreA (gamma), UreB (beta) and UreC (alpha) subunits. Three heterotrimers associate to form the active enzyme. Requires Ni cation as cofactor. In terms of processing, carboxylation allows a single lysine to coordinate two nickel ions.

The protein resides in the cytoplasm. The catalysed reaction is urea + 2 H2O + H(+) = hydrogencarbonate + 2 NH4(+). The protein operates within nitrogen metabolism; urea degradation; CO(2) and NH(3) from urea (urease route): step 1/1. The protein is Urease subunit alpha of Citrobacter koseri (strain ATCC BAA-895 / CDC 4225-83 / SGSC4696).